The primary structure comprises 271 residues: MAPRGLPGSAVLAAAVFVGGAVSSPLVRSDHSGSHPLPSKTETTPSPTNNNGNGHPEYIAYALVPVFFVMGLFGVLICHLLKKKGYRCTTEAEQDVEGEKVEKIELNDSVNENSDTVGQIVQYIMKNEANVDILAAMVEDNNVCDPESPVTPSTPGSPPVSPGPLSPGVTPGKHICGHHLHTVGGPVERDVCHRCRHKRWHFIKPTNKSKEGRPRRQGEVTVLSVGRFRVTKVEPKSNQKERRSLMSVSGTDSVNGEVPVTPVKRQQSDSE.

The signal sequence occupies residues 1–23; sequence MAPRGLPGSAVLAAAVFVGGAVS. Residues 24–57 are Extracellular-facing; sequence SPLVRSDHSGSHPLPSKTETTPSPTNNNGNGHPE. Positions 27-52 are disordered; the sequence is VRSDHSGSHPLPSKTETTPSPTNNNG. The span at 36–52 shows a compositional bias: low complexity; the sequence is PLPSKTETTPSPTNNNG. A helical membrane pass occupies residues 58 to 78; that stretch reads YIAYALVPVFFVMGLFGVLIC. Residues 79–271 are Cytoplasmic-facing; it reads HLLKKKGYRC…PVKRQQSDSE (193 aa). Phosphoserine is present on residues Ser109 and Ser114. Disordered stretches follow at residues 144 to 168 and 231 to 271; these read CDPESPVTPSTPGSPPVSPGPLSPG and TKVE…SDSE. A compositionally biased stretch (pro residues) spans 155-165; it reads PGSPPVSPGPL. The span at 231–244 shows a compositional bias: basic and acidic residues; that stretch reads TKVEPKSNQKERRS. 2 positions are modified to phosphoserine: Ser244 and Ser247.

Belongs to the RELT family. Interacts with RELT, RELL2, OXSR1 and PLSCR1.

It localises to the cell membrane. In terms of biological role, induces activation of MAPK14/p38 cascade, when overexpressed. Induces apoptosis, when overexpressed. This Bos taurus (Bovine) protein is RELT-like protein 1 (RELL1).